We begin with the raw amino-acid sequence, 313 residues long: Glutathionyl-hydroquinone reductase PcpF (313 aa).

Cys53 (nucleophile) is an active-site residue. Residues Trp86, 119 to 122 (RVTI), and 137 to 138 (ES) contribute to the glutathione site. The 125-residue stretch at 161 to 285 (PAEFRPEIDR…INLRHAKAHY (125 aa)) folds into the GST C-terminal domain. Tyr184 (proton donor/acceptor) is an active-site residue.

This sequence belongs to the GST superfamily. Xi-class GSH transferase family. As to quaternary structure, homodimer.

It catalyses the reaction 2-(glutathione-S-yl)-hydroquinone + glutathione = hydroquinone + glutathione disulfide. Its function is as follows. Catalyzes glutathione (GSH)-dependent reduction of glutathionyl-hydroquinones (GS-HQs) to the corresponding hydroquinones. Can act on halogenated substrates such as GS-2,6-dichloro-p-hydroquinone (GS-DiCH) and GS-trichloro-p-hydroquinone (GS-TriCH). Involved in the degradation of pentachlorophenol (PCP), a toxic pollutant. In Sphingobium chlorophenolicum, this protein is Glutathionyl-hydroquinone reductase PcpF.